The primary structure comprises 86 residues: Large ribosomal subunit protein bL27 (86 aa).

Residues 1-23 are disordered; the sequence is MAHKKGTGSTRNGRDSNSKRLGV.

The protein belongs to the bacterial ribosomal protein bL27 family.

In Prochlorococcus marinus (strain MIT 9515), this protein is Large ribosomal subunit protein bL27.